Here is a 101-residue protein sequence, read N- to C-terminus: Small ribosomal subunit protein uS17 (101 aa).

It belongs to the universal ribosomal protein uS17 family. In terms of assembly, part of the 30S ribosomal subunit.

Functionally, one of the primary rRNA binding proteins, it binds specifically to the 5'-end of 16S ribosomal RNA. This Kosmotoga olearia (strain ATCC BAA-1733 / DSM 21960 / TBF 19.5.1) protein is Small ribosomal subunit protein uS17.